A 124-amino-acid polypeptide reads, in one-letter code: Magnetosome protein MamC (124 aa).

Over 2 to 8 the chain is Cytoplasmic; sequence PFHLAPY. The chain crosses the membrane as a helical span at residues 9–29; it reads LAKSVPGVGVLGALVGGAAAL. The Lumenal segment spans residues 30–64; it reads AKNVRLLKEKRITNTEAAIDTGKETVGAGLATALS. Residues 36–56 form an MIC, when fused with the C-terminus of maltose-binding protein (MBP) or expressed as a fragment, improves quality of iron particles during precipitation experiments, binds magnetite region; sequence LKEKRITNTEAAIDTGKETVG. The chain crosses the membrane as a helical span at residues 65–85; that stretch reads AVAATAVGGGLVVSLGTALVA. At 86-124 the chain is on the cytoplasmic side; sequence GVAAKYAWDRGVDLVEKELNRGKAANGASDEDILRDELA.

It belongs to the magnetosome MamC family. Probably interacts with MamA.

The protein resides in the magnetosome membrane. In terms of biological role, probably involved in magnetite crystal growth. The lumenal domain may bind the magnetite crystals, affecting crystal size and shape. This chain is Magnetosome protein MamC, found in Paramagnetospirillum magneticum (strain ATCC 700264 / AMB-1) (Magnetospirillum magneticum).